The sequence spans 184 residues: Outer-membrane lipoprotein carrier protein (184 aa).

Residues 1–19 (MRAFLKILMVLIFMSVAYA) form the signal peptide.

This sequence belongs to the LolA family. As to quaternary structure, monomer.

The protein resides in the periplasm. Functionally, participates in the translocation of lipoproteins from the inner membrane to the outer membrane. Only forms a complex with a lipoprotein if the residue after the N-terminal Cys is not an aspartate (The Asp acts as a targeting signal to indicate that the lipoprotein should stay in the inner membrane). In Helicobacter pylori (strain HPAG1), this protein is Outer-membrane lipoprotein carrier protein.